Consider the following 500-residue polypeptide: MDVFKQSEVWFVIGSQNLYGPKTLQQVMDNAHQVVNSLNSEAGLPVKLVLKPLVTTPDEITALCREANYDTACIGIMTWLHTFSPAKMWIGGLSILNKPLLQFHTQFNAQIPWETMDMDFMNLNQTAHGGREFGFIGARMRQQHSVITGHWQDKEAHQRIGQWMRVAAAKQESQQLKVARFGDNMREVAVTEGDKVAAQIQFGYSVNAYGIGDLVAVVDAVSKGDIDTLVEEYEATYRFSDAVKLNGDKRENLLDAARIELGMKRFLEQGGFKAFTTNFENLYGLKQLPGLAVQRLMQQGYGFGGEGDWKTAALLRILKVMGTGLKGGTSFMEDYTYNFQPGNDLVVGSHMLEVCPSIAKEEKPLLDVQHLGIGGKADPARLIFSTPAGPALNASLIDMGNRFRLLVNVVDTVEQPHPLPKLPVARAIWQAQPSLATAAEAWIIAGGAHHTVFSQAVGVDELRLYAEMHGIEFLLIDNDTTLPAFKNEIRWNEVYYQLNR.

Residues glutamate 306, glutamate 333, histidine 350, and histidine 450 each coordinate Mn(2+).

Belongs to the arabinose isomerase family. Homohexamer. Mn(2+) is required as a cofactor.

It carries out the reaction beta-L-arabinopyranose = L-ribulose. The protein operates within carbohydrate degradation; L-arabinose degradation via L-ribulose; D-xylulose 5-phosphate from L-arabinose (bacterial route): step 1/3. In terms of biological role, catalyzes the conversion of L-arabinose to L-ribulose. The chain is L-arabinose isomerase from Yersinia pseudotuberculosis serotype O:3 (strain YPIII).